A 663-amino-acid polypeptide reads, in one-letter code: Ras and EF-hand domain-containing protein (663 aa).

EF-hand domains follow at residues 1-33 (MNHAELRRLFAACDGNQSGRVEYEDFTTVCREL) and 35-70 (VPADDIRTLFNKFDLDGDGYINFNDFSSSFQEVSEA). Positions 14, 16, 18, 20, 25, 48, 50, 52, 54, and 59 each coordinate Ca(2+). The stretch at 122-297 (ELLLQQFEDL…LKKMVMEFQS (176 aa)) forms a coiled coil. Over residues 324 to 336 (SQENASTKRQLSP) the composition is skewed to polar residues. Residues 324 to 343 (SQENASTKRQLSPRNEVLPR) form a disordered region. GTP is bound by residues 477 to 482 (GSGKSS), 580 to 583 (NKVD), and 615 to 616 (AK).

This sequence belongs to the small GTPase superfamily. Rab family. Homodimer.

Its subcellular location is the cytoplasm. It is found in the perinuclear region. Its function is as follows. Binds predominantly GDP, and also GTP. The chain is Ras and EF-hand domain-containing protein (rasef) from Danio rerio (Zebrafish).